The chain runs to 980 residues: GPI inositol-deacylase (980 aa).

At 1–7 (MFMFRNC) the chain is on the cytoplasmic side. The helical transmembrane segment at 8-28 (AVLLVIGSICCFIYGLFRLHV) threads the bilayer. The Lumenal segment spans residues 29 to 628 (EVEPNACRMT…EYSYSSALSR (600 aa)). The active site involves Ser-170. 3 N-linked (GlcNAc...) asparagine glycosylation sites follow: Asn-427, Asn-517, and Asn-596. A helical membrane pass occupies residues 629–649 (LVLEFYGWLPAHLVCVLLIVL). The Cytoplasmic segment spans residues 650–709 (RKQVETFYDVGTFRSLRPYVGYLQYTSLYIVTACRLLKKLIISSRVFPEPEPLDYSINVS). Residues 710–730 (IVIHCAAIALSLLATLGTWLA) form a helical membrane-spanning segment. The Lumenal segment spans residues 731-774 (LTLYGNAFYRLALRITRLSQATSNVMISIMTHLPITYGILTIAT). The chain crosses the membrane as a helical span at residues 775–795 (AMGTCSGVGLLLAFVFYFLML). At 796 to 867 (SNAYKDYLED…CVGLQNFSFH (72 aa)) the chain is on the cytoplasmic side. The tract at residues 821–853 (AVTEQEDATEEQNEEQNALKQNDEQKQQQQEEE) is disordered. A compositionally biased stretch (acidic residues) spans 824–834 (EQEDATEEQNE). A helical transmembrane segment spans residues 868–888 (VTLLLMLFVQLLLNAPSSLAW). Residues 889–895 (LRSRRHG) lie on the Lumenal side of the membrane. A helical transmembrane segment spans residues 896-916 (INLPDPSLYPSIVVLASLSLL). Over 917-929 (LQLRAPQKCQGYW) the chain is Cytoplasmic. A helical transmembrane segment spans residues 930 to 950 (MLSIAFYILAGVVLLYCQAAI). Residues 951–954 (YRLT) are Lumenal-facing. The chain crosses the membrane as a helical span at residues 955–975 (YVIAGAFALLSAHQSLWILWG). The Cytoplasmic portion of the chain corresponds to 976–980 (RVSRV).

This sequence belongs to the GPI inositol-deacylase family.

The protein resides in the endoplasmic reticulum membrane. Its function is as follows. Involved in inositol deacylation of GPI-anchored proteins. This chain is GPI inositol-deacylase, found in Drosophila melanogaster (Fruit fly).